We begin with the raw amino-acid sequence, 145 residues long: Putative pre-16S rRNA nuclease (145 aa).

It belongs to the YqgF nuclease family.

Its subcellular location is the cytoplasm. Could be a nuclease involved in processing of the 5'-end of pre-16S rRNA. In Tropheryma whipplei (strain Twist) (Whipple's bacillus), this protein is Putative pre-16S rRNA nuclease.